The sequence spans 557 residues: Hyaluronan synthase 3 (557 aa).

At 1-10 (MPGKFQTGLR) the chain is on the cytoplasmic side. The helical transmembrane segment at 11-31 (VLATCLFALLVLGGILVAYVT) threads the bilayer. Residues 32–44 (GYQFIHTDRHHLS) lie on the Extracellular side of the membrane. The chain crosses the membrane as a helical span at residues 45-65 (FGLYGAILGLHLLSQSLFAFL). Residues 66-367 (EHRKMRGGGR…NALWFHKHHL (302 aa)) lie on the Cytoplasmic side of the membrane. A helical membrane pass occupies residues 368-388 (WMTYESVVTGFFPFFLVATVV). At 389-398 (QLFYRGRVWN) the chain is on the extracellular side. Residues 399–419 (ILLFLLTVQLVGILKATYACI) traverse the membrane as a helical segment. Residues 420–430 (LRGNAEMIFMS) are Cytoplasmic-facing. A helical membrane pass occupies residues 431-451 (LYSLLYMTSLLPAKIFAVITI). Residues 452 to 463 (KKSGWGTSGRRK) are Extracellular-facing. A helical transmembrane segment spans residues 464 to 484 (LVVNFMGMVPVSVWFCILLGG). Residues 485–501 (LVYTAYCQSHDPFTETE) are Cytoplasmic-facing. A helical transmembrane segment spans residues 502-522 (LLFLLTGAILYGCYWVALLSL). Residues 523–557 (YLALIARRCGKRQELYNLALEEVSEPEPAAKAIKP) are Extracellular-facing.

It belongs to the NodC/HAS family. Mg(2+) is required as a cofactor. O-GlcNAcylation increases the hyaluronan synthase activity, HAS3 stability and its plasma membrane residence. The concentration of UDP-GlcNAc controls the level of O-GlcNAc modification.

The protein resides in the cell membrane. The protein localises to the golgi apparatus membrane. It localises to the golgi apparatus. It is found in the trans-Golgi network membrane. Its subcellular location is the cytoplasmic vesicle. It carries out the reaction [hyaluronan](n) + UDP-N-acetyl-alpha-D-glucosamine = N-acetyl-beta-D-glucosaminyl-(1-&gt;4)-[hyaluronan](n) + UDP + H(+). The enzyme catalyses N-acetyl-beta-D-glucosaminyl-(1-&gt;4)-[hyaluronan](n) + UDP-alpha-D-glucuronate = [hyaluronan](n+1) + UDP + H(+). It functions in the pathway glycan biosynthesis; hyaluronan biosynthesis. Its function is as follows. Catalyzes the addition of GlcNAc or GlcUA monosaccharides to the nascent hyaluronan polymer. Therefore, it is essential to hyaluronan synthesis a major component of most extracellular matrices that has a structural role in tissues architectures and regulates cell adhesion, migration and differentiation. This is one of three isoenzymes responsible for cellular hyaluronan synthesis. This chain is Hyaluronan synthase 3 (has3), found in Xenopus laevis (African clawed frog).